The chain runs to 289 residues: MELTRVTAFCPGHISGYFLPVIHDDPDLSGSIGAGIVISEGVRVIAEKSADSTVKIFQTDRYGLPEEIAESSPVLMDLLAYMQVNASIETFCHLPIGSGYGMSAAALLGTVHALNALYNFHLSPRECARIAHRIEVQHQSGLGDISACQGGGFVIRKTPGPDGDIMRVIDTRPIYALTISPIKTSSVLSSHDMIAQITQSFPSRIPQNLDDIMSLSREFAEKSGLISKEIRTVLTACDKENLPASMTMLGCGVFALGKRAETVLKKFGEVFKLTISPGGPAILFGERSS.

The protein belongs to the GHMP kinase family. PoK subfamily.

It carries out the reaction (R)-pantoate + ATP = (R)-4-phosphopantoate + ADP + H(+). It participates in cofactor biosynthesis; coenzyme A biosynthesis. Its function is as follows. Phosphorylates (R)-pantoate to form (R)-4-phosphopantoate in the CoA biosynthesis pathway. ATP is the best phosphate donor. Can be replaced with UTP, with lower efficiency. The sequence is that of Pantoate kinase from Methanospirillum hungatei JF-1 (strain ATCC 27890 / DSM 864 / NBRC 100397 / JF-1).